A 188-amino-acid polypeptide reads, in one-letter code: Elongation factor P (188 aa).

It belongs to the elongation factor P family.

It localises to the cytoplasm. Its pathway is protein biosynthesis; polypeptide chain elongation. Functionally, involved in peptide bond synthesis. Stimulates efficient translation and peptide-bond synthesis on native or reconstituted 70S ribosomes in vitro. Probably functions indirectly by altering the affinity of the ribosome for aminoacyl-tRNA, thus increasing their reactivity as acceptors for peptidyl transferase. This is Elongation factor P from Rickettsia akari (strain Hartford).